We begin with the raw amino-acid sequence, 429 residues long: Ribosomal RNA small subunit methyltransferase B (429 aa).

S-adenosyl-L-methionine-binding positions include 254–260 (CAAPGGK), Asp277, Asp303, and Asp322. Catalysis depends on Cys375, which acts as the Nucleophile.

The protein belongs to the class I-like SAM-binding methyltransferase superfamily. RsmB/NOP family.

It is found in the cytoplasm. It carries out the reaction cytidine(967) in 16S rRNA + S-adenosyl-L-methionine = 5-methylcytidine(967) in 16S rRNA + S-adenosyl-L-homocysteine + H(+). Specifically methylates the cytosine at position 967 (m5C967) of 16S rRNA. The protein is Ribosomal RNA small subunit methyltransferase B of Escherichia fergusonii (strain ATCC 35469 / DSM 13698 / CCUG 18766 / IAM 14443 / JCM 21226 / LMG 7866 / NBRC 102419 / NCTC 12128 / CDC 0568-73).